A 413-amino-acid chain; its full sequence is Azaphilone biosynthesis cluster protein M (413 aa).

Polar residues predominate over residues 123 to 138 (STQPDQVQPNQPTPSF). The interval 123-145 (STQPDQVQPNQPTPSFESAAGAS) is disordered.

The protein operates within secondary metabolite biosynthesis. Functionally, part of the gene cluster that mediates the biosynthesis of azaterrilone A and other azaphilones, a class of fungal metabolites characterized by a highly oxygenated pyrano-quinone bicyclic core and exhibiting a broad range of bioactivities. The first step of the pathway begins with the non-reducing polyketide synthase tazA that assembles one acetyl-CoA starter unit, five malonyl-CoA units, and catalyzes a series of Claisen condensations, methylation, PT-mediated cyclization, and finally releases the first hexaketide precursor through the R-domain. The tazA product then undergoes reduction on its terminal ketone and the following pyran-ring formation by yet undetermined enzyme(s). Dehydration and enoyl reduction, possibly involving the trans-enoyl reductase tazE leads to the next intermediate. TazD is predicted as an acetyltransferase and might catalyze the acetylation steps leading to the synthesis of azaterrilone A. Azaterrilone A is not the final product of the taz pathway and both the highly reducing polyketide synthase tazB and the dual enzyme tazHJ catalyze late steps of the pathway, leading to the production of the 2 final stereoisomers that contain additional polyketide modification whose structures have still to be determined. The chain is Azaphilone biosynthesis cluster protein M from Aspergillus terreus (strain NIH 2624 / FGSC A1156).